The following is a 368-amino-acid chain: Aminomethyltransferase (368 aa).

The protein belongs to the GcvT family. As to quaternary structure, the glycine cleavage system is composed of four proteins: P, T, L and H.

It catalyses the reaction N(6)-[(R)-S(8)-aminomethyldihydrolipoyl]-L-lysyl-[protein] + (6S)-5,6,7,8-tetrahydrofolate = N(6)-[(R)-dihydrolipoyl]-L-lysyl-[protein] + (6R)-5,10-methylene-5,6,7,8-tetrahydrofolate + NH4(+). In terms of biological role, the glycine cleavage system catalyzes the degradation of glycine. The protein is Aminomethyltransferase of Xylella fastidiosa (strain M12).